Here is a 306-residue protein sequence, read N- to C-terminus: Probable protein ABIL1 (306 aa).

The tract at residues 200–236 is disordered; that stretch reads KNSKTNGARQSEFVLEETKATKPASRGKEPSTSPLPK.

Belongs to the ABI family. In terms of assembly, binds SCAR.

It is found in the cytoplasm. It localises to the cytoskeleton. In terms of biological role, involved in regulation of actin and microtubule organization. Part of a WAVE complex that activates the Arp2/3 complex. The polypeptide is Probable protein ABIL1 (Oryza sativa subsp. japonica (Rice)).